Reading from the N-terminus, the 476-residue chain is Calcitonin gene-related peptide type 1 receptor (476 aa).

The first 33 residues, 1-33 (METLQMGLLSRSALFKYIIIFLIMINTRGYVLA), serve as a signal peptide directing secretion. The Extracellular segment spans residues 34–154 (SQEQEAKTSV…FTHEKVKTAL (121 aa)). 3 disulfide bridges follow: Cys-63–Cys-89, Cys-80–Cys-120, and Cys-103–Cys-142. Asn-81, Asn-133, and Asn-138 each carry an N-linked (GlcNAc...) asparagine glycan. Residues 155–179 (NLYYLTIIGHGLSIASLLISLGIFF) traverse the membrane as a helical segment. The Cytoplasmic portion of the chain corresponds to 180–190 (YFKNLSCQRIT). Residues 191-213 (LHKNLFFSFVCNSIITIISLSAV) form a helical membrane-spanning segment. Residues 214–224 (ANNQALVATNP) lie on the Extracellular side of the membrane. Residues 225 to 253 (VICKISQFIHLYLMGCNYFWMLCEGIYLH) form a helical membrane-spanning segment. Residues 254–267 (TLIVVAVFAEKQHL) lie on the Cytoplasmic side of the membrane. A helical transmembrane segment spans residues 268-288 (MWYYLLGWGFPLIPACIHAVA). Residues 289-304 (RSLYYNDNCWISSETH) are Extracellular-facing. Residues 305–329 (LLYIIHGPICAALLVNLFFLLNIVR) form a helical membrane-spanning segment. The Cytoplasmic segment spans residues 330–344 (VLITKLKVTHQAESN). A helical membrane pass occupies residues 345-366 (LYMKAVRATLILVPLLGIEFVL). The Extracellular portion of the chain corresponds to 367 to 381 (FPWKPEGRIAEEIYD). The chain crosses the membrane as a helical span at residues 382–402 (YVMHILMHYQGLLVATIFCFF). The Cytoplasmic segment spans residues 403–476 (NGEVQAVLKR…VFFKTEKQYM (74 aa)).

The protein belongs to the G-protein coupled receptor 2 family.

It is found in the cell membrane. May function as G protein-coupled receptor for calcitonin-gene-related peptides and adrenomedullin. Specificity may be modulated by accessory proteins. May activate cAMP-dependent pathway. This Xenopus laevis (African clawed frog) protein is Calcitonin gene-related peptide type 1 receptor (calcrl).